The primary structure comprises 847 residues: Vacuolar membrane protease (847 aa).

The Cytoplasmic segment spans residues 1 to 17; that stretch reads MQFGKSLLKHVYTRTFK. Residues 18–38 form a helical membrane-spanning segment; that stretch reads SSLTCSIFAFTLLMIFFVLDW. Residues 39 to 348 are Vacuolar-facing; the sequence is KRMNVYPRLD…GSYWQINLNL (310 aa). 2 residues coordinate Zn(2+): His-146 and Asp-158. Catalysis depends on Glu-190, which acts as the Proton acceptor. Glu-191 is a Zn(2+) binding site. N-linked (GlcNAc...) asparagine glycosylation occurs at Asn-208. A Zn(2+)-binding site is contributed by Glu-216. An N-linked (GlcNAc...) asparagine glycan is attached at Asn-274. His-291 lines the Zn(2+) pocket. The helical transmembrane segment at 349 to 369 threads the bilayer; the sequence is HLFLNVVFLIACPAILFMCLF. Residues 370-381 are Cytoplasmic-facing; sequence RFPSLYAQLKKP. A helical transmembrane segment spans residues 382–402; it reads CYLICFTLSSLFVLIFDYVVV. The Vacuolar portion of the chain corresponds to 403 to 415; that stretch reads QSLTKLNPYVIHS. The chain crosses the membrane as a helical span at residues 416–436; that stretch reads SPDAVLAFFFLTNLLGLVYSF. The Cytoplasmic segment spans residues 437-454; it reads RYVATHSRMSNEELSCIE. Residues 455–475 form a helical membrane-spanning segment; sequence IVLIWYVSMFWYISLLIATLT. The Vacuolar portion of the chain corresponds to 476-482; sequence SIVRGLG. The helical transmembrane segment at 483–503 threads the bilayer; that stretch reads SLYFVNFGFFCSFFCCILTLI. The Cytoplasmic segment spans residues 504–560; it reads RVRYFVDRMVTINRPANPEQMPLVQSTSGNAYGTSRYPQHRLKAVVSKSASVKLNDN. A helical membrane pass occupies residues 561–581; that stretch reads LWSVLFFSCLVPLPLFTCYNL. Topologically, residues 582-605 are vacuolar; that stretch reads LSEVFIPAVHQSLIDGPYSNTCYK. The helical transmembrane segment at 606–626 threads the bilayer; sequence FAVILVFMAIINSSPFVFRAL. Residues 627–630 are Cytoplasmic-facing; it reads SKKS. A helical membrane pass occupies residues 631–651; sequence SAILLMLWVSLLFNILRAEPF. At 652 to 847 the chain is on the vacuolar side; the sequence is NEKAPIKFRV…LLKMSKTHVM (196 aa). N-linked (GlcNAc...) asparagine glycosylation is found at Asn-726, Asn-734, Asn-800, and Asn-834.

This sequence belongs to the peptidase M28 family. Zn(2+) serves as cofactor.

It localises to the vacuole membrane. May be involved in vacuolar sorting and osmoregulation. This is Vacuolar membrane protease from Schizosaccharomyces japonicus (strain yFS275 / FY16936) (Fission yeast).